A 390-amino-acid polypeptide reads, in one-letter code: 3,5-dihydroxyphenylacetyl-CoA synthase (390 aa).

C173 is an active-site residue.

This sequence belongs to the thiolase-like superfamily. Chalcone/stilbene synthases family.

It catalyses the reaction 4 malonyl-CoA + 4 H(+) = (3,5-dihydroxyphenyl)acetyl-CoA + 4 CO2 + 3 CoA + H2O. The protein operates within antibiotic biosynthesis; vancomycin biosynthesis. Its function is as follows. Involved in the biosynthesis of the nonproteinogenic amino acid monomer (S)-3,5-dihydroxyphenylglycine (Dpg) responsible of the production of vancomycin and teicoplanin antibiotics. Catalyzes the Claisen condensation of four molecules of malonyl-CoA to yield 3,5-dihydroxyphenylacetyl-CoA (DPA-CoA) and three free coenzyme A (CoA). DpgA requires the presence of the dehydratases DpgB and DpgD to facilitate the aromatization of the DPA-S-DgpA or DPA-S-CoA intermediate. The sequence is that of 3,5-dihydroxyphenylacetyl-CoA synthase from Streptomyces toyocaensis.